Consider the following 228-residue polypeptide: Phosphoglycolate phosphatase (228 aa).

Residue aspartate 12 is the Nucleophile of the active site. Residues aspartate 12, aspartate 14, and aspartate 177 each coordinate Mg(2+).

This sequence belongs to the HAD-like hydrolase superfamily. CbbY/CbbZ/Gph/YieH family. Requires Mg(2+) as cofactor.

The enzyme catalyses 2-phosphoglycolate + H2O = glycolate + phosphate. It participates in organic acid metabolism; glycolate biosynthesis; glycolate from 2-phosphoglycolate: step 1/1. In terms of biological role, specifically catalyzes the dephosphorylation of 2-phosphoglycolate. Is involved in the dissimilation of the intracellular 2-phosphoglycolate formed during the DNA repair of 3'-phosphoglycolate ends, a major class of DNA lesions induced by oxidative stress. In Vibrio vulnificus (strain YJ016), this protein is Phosphoglycolate phosphatase.